A 102-amino-acid chain; its full sequence is Major basic nuclear protein 2 (102 aa).

The segment covering 1 to 11 (MKAMKATKKAM) has biased composition (basic residues). Residues 1–43 (MKAMKATKKAMTKTGLAEALAPKPSSARRIAPPSSRAWPPSAQ) form a disordered region. The span at 21-42 (APKPSSARRIAPPSSRAWPPSA) shows a compositional bias: low complexity.

The protein resides in the nucleus. This is Major basic nuclear protein 2 (HCc2) from Crypthecodinium cohnii (Dinoflagellate).